A 164-amino-acid chain; its full sequence is 2S seed storage protein 3 (164 aa).

An N-terminal signal peptide occupies residues Met-1 to Ala-21. Propeptides lie at residues Ser-22–Asn-37 and Gly-73–Asp-81.

Belongs to the 2S seed storage albumins family. The mature protein consists of a small and a large chain linked by disulfide bonds. Interacts with AHK2.

Functionally, this is a 2S seed storage protein. This chain is 2S seed storage protein 3 (AT2S3), found in Arabidopsis thaliana (Mouse-ear cress).